The chain runs to 110 residues: UPF0251 protein PH0803 (110 aa).

This sequence belongs to the UPF0251 family.

The polypeptide is UPF0251 protein PH0803 (Pyrococcus horikoshii (strain ATCC 700860 / DSM 12428 / JCM 9974 / NBRC 100139 / OT-3)).